The primary structure comprises 641 residues: Pre-mRNA-processing factor 39 (641 aa).

Residues 1-50 form a disordered region; the sequence is MEKSPEHCAEGSPSPATESAPSATEPPLPSTEPPLPSTEPPLPSTEPPLP. Positions 10 to 23 are enriched in low complexity; that stretch reads EGSPSPATESAPSA. Residues 24–50 show a composition bias toward pro residues; that stretch reads TEPPLPSTEPPLPSTEPPLPSTEPPLP. 7 HAT repeats span residues 50–82, 84–116, 118–150, 158–193, 304–336, 338–370, and 372–407; these read PPLP…YVEQ, NHLF…LEKK, NNIL…FLKE, ETSL…WETE, NFEE…FELE, GSNE…YMEN, and SVEG…QQGN.

Belongs to the PRP39 family.

It is found in the nucleus. Its function is as follows. Involved in pre-mRNA splicing. The polypeptide is Pre-mRNA-processing factor 39 (prpf39) (Xenopus laevis (African clawed frog)).